Here is a 100-residue protein sequence, read N- to C-terminus: Large ribosomal subunit protein bL28 (100 aa).

This sequence belongs to the bacterial ribosomal protein bL28 family.

The chain is Large ribosomal subunit protein bL28 from Gluconobacter oxydans (strain 621H) (Gluconobacter suboxydans).